Consider the following 142-residue polypeptide: Required for drug-induced death protein 1 (142 aa).

2 disordered regions span residues 1–32 (MTVG…DEEA) and 46–66 (EAAA…TRGA). Residues 116–138 (VVIGLQGFAAAYSAPFAVATSVV) traverse the membrane as a helical segment.

It is found in the membrane. Regulates drug efflux through modulation of ABCB1 localization and activity. This Homo sapiens (Human) protein is Required for drug-induced death protein 1.